Reading from the N-terminus, the 430-residue chain is Adenylosuccinate synthetase (430 aa).

Residues 12-18 (GDEGKGK) and 40-42 (GHT) each bind GTP. The active-site Proton acceptor is Asp-13. The Mg(2+) site is built by Asp-13 and Gly-40. IMP is bound by residues 13–16 (DEGK), 38–41 (NAGH), Thr-130, Arg-144, Gln-224, Thr-239, and Arg-303. His-41 (proton donor) is an active-site residue. Residue 299 to 305 (TNTGRPR) participates in substrate binding. GTP is bound by residues Arg-305, 331–333 (KLD), and 413–415 (STS).

This sequence belongs to the adenylosuccinate synthetase family. As to quaternary structure, homodimer. Mg(2+) is required as a cofactor.

It is found in the cytoplasm. The enzyme catalyses IMP + L-aspartate + GTP = N(6)-(1,2-dicarboxyethyl)-AMP + GDP + phosphate + 2 H(+). Its pathway is purine metabolism; AMP biosynthesis via de novo pathway; AMP from IMP: step 1/2. In terms of biological role, plays an important role in the de novo pathway of purine nucleotide biosynthesis. Catalyzes the first committed step in the biosynthesis of AMP from IMP. This chain is Adenylosuccinate synthetase, found in Rhodopseudomonas palustris (strain BisB5).